Reading from the N-terminus, the 572-residue chain is uncharacterized protein (572 aa).

The tract at residues 553-572 is disordered; it reads PSPAPKPVTVRKKKGNSPIS. Positions 561–572 are enriched in basic residues; that stretch reads TVRKKKGNSPIS.

This is an uncharacterized protein from Homo sapiens (Human).